The following is a 251-amino-acid chain: Ditrans,polycis-undecaprenyl-diphosphate synthase ((2E,6E)-farnesyl-diphosphate specific) (251 aa).

Aspartate 20 is an active-site residue. Residue aspartate 20 coordinates Mg(2+). Residues 21–24 (GNGR), tryptophan 25, arginine 33, histidine 37, and 65–67 (SSE) contribute to the substrate site. Asparagine 68 serves as the catalytic Proton acceptor. Substrate contacts are provided by residues tryptophan 69, arginine 71, arginine 188, and 194–196 (RIS). A Mg(2+)-binding site is contributed by glutamate 207.

Belongs to the UPP synthase family. In terms of assembly, homodimer. Requires Mg(2+) as cofactor.

It carries out the reaction 8 isopentenyl diphosphate + (2E,6E)-farnesyl diphosphate = di-trans,octa-cis-undecaprenyl diphosphate + 8 diphosphate. Its function is as follows. Catalyzes the sequential condensation of isopentenyl diphosphate (IPP) with (2E,6E)-farnesyl diphosphate (E,E-FPP) to yield (2Z,6Z,10Z,14Z,18Z,22Z,26Z,30Z,34E,38E)-undecaprenyl diphosphate (di-trans,octa-cis-UPP). UPP is the precursor of glycosyl carrier lipid in the biosynthesis of bacterial cell wall polysaccharide components such as peptidoglycan and lipopolysaccharide. In Vibrio parahaemolyticus serotype O3:K6 (strain RIMD 2210633), this protein is Ditrans,polycis-undecaprenyl-diphosphate synthase ((2E,6E)-farnesyl-diphosphate specific).